The sequence spans 356 residues: Arginine kinase (356 aa).

The residue at position 2 (alanine 2) is an N-acetylalanine. The region spanning 9 to 91 (KLEEGFKKLE…FDPIIEDYHK (83 aa)) is the Phosphagen kinase N-terminal domain. 64-68 (GVGIY) provides a ligand contact to L-arginine. The 238-residue stretch at 119–356 (FVISTRVRCG…LELIKIEKEM (238 aa)) folds into the Phosphagen kinase C-terminal domain. ATP is bound by residues 122–126 (STRVR) and histidine 185. An L-arginine-binding site is contributed by glutamate 225. Arginine 229 is an ATP binding site. Residue cysteine 271 participates in L-arginine binding. Residues 280–284 (RASVH) and 309–314 (RGTRGE) each bind ATP. Glutamate 314 is a binding site for L-arginine.

This sequence belongs to the ATP:guanido phosphotransferase family.

It catalyses the reaction L-arginine + ATP = N(omega)-phospho-L-arginine + ADP + H(+). In Homarus gammarus (European lobster), this protein is Arginine kinase.